Consider the following 390-residue polypeptide: L-seryl-tRNA(Sec) selenium transferase (390 aa).

The residue at position 225 (Lys-225) is an N6-(pyridoxal phosphate)lysine.

It belongs to the SelA family. Pyridoxal 5'-phosphate serves as cofactor.

It localises to the cytoplasm. It carries out the reaction L-seryl-tRNA(Sec) + selenophosphate + H(+) = L-selenocysteinyl-tRNA(Sec) + phosphate. It functions in the pathway aminoacyl-tRNA biosynthesis; selenocysteinyl-tRNA(Sec) biosynthesis; selenocysteinyl-tRNA(Sec) from L-seryl-tRNA(Sec) (bacterial route): step 1/1. In terms of biological role, converts seryl-tRNA(Sec) to selenocysteinyl-tRNA(Sec) required for selenoprotein biosynthesis. In Helicobacter pylori (strain P12), this protein is L-seryl-tRNA(Sec) selenium transferase.